The primary structure comprises 696 residues: C2 domain-containing protein 2 (696 aa).

Residues 13-33 (AQWLALVSLFVAALATVGLYL) form a helical membrane-spanning segment. Residues 51–242 (EPGEGPRPGS…PTTVKEAQNL (192 aa)) enclose the SMP-LBD domain. The residue at position 60 (S60) is a Phosphoserine. The 118-residue stretch at 245 to 362 (AASTAQESCP…KKQPSGPQSF (118 aa)) folds into the C2 domain. Residues S435 and S441 each carry the phosphoserine modification. Residue T445 is modified to Phosphothreonine. The tract at residues 539 to 580 (VDSTHQEDAPSHPERAAASAPPEEAESAQASLAPKPQEDELD) is disordered. Residues 542–553 (THQEDAPSHPER) are compositionally biased toward basic and acidic residues. Over residues 554 to 572 (AAASAPPEEAESAQASLAP) the composition is skewed to low complexity. A Phosphoserine modification is found at S581.

Its subcellular location is the membrane. This Homo sapiens (Human) protein is C2 domain-containing protein 2 (C2CD2).